We begin with the raw amino-acid sequence, 320 residues long: Cytochrome f (320 aa).

The first 35 residues, 1 to 35 (MQMRNTFSWIKEEIIRFIAVSLIIYIITRAPISNA), serve as a signal peptide directing secretion. Heme contacts are provided by tyrosine 36, cysteine 56, cysteine 59, and histidine 60. A helical membrane pass occupies residues 286–306 (VQGLLLFLASIILAQIFLVLK).

It belongs to the cytochrome f family. The 4 large subunits of the cytochrome b6-f complex are cytochrome b6, subunit IV (17 kDa polypeptide, petD), cytochrome f and the Rieske protein, while the 4 small subunits are PetG, PetL, PetM and PetN. The complex functions as a dimer. The cofactor is heme.

It localises to the plastid. The protein resides in the chloroplast thylakoid membrane. Its function is as follows. Component of the cytochrome b6-f complex, which mediates electron transfer between photosystem II (PSII) and photosystem I (PSI), cyclic electron flow around PSI, and state transitions. The polypeptide is Cytochrome f (Morus indica (Mulberry)).